Reading from the N-terminus, the 167-residue chain is Urease accessory protein UreE (167 aa).

The segment at 137–158 is disordered; sequence EAGAYQSAPHGHSHSHAHGHDH.

It belongs to the UreE family.

It localises to the cytoplasm. Functionally, involved in urease metallocenter assembly. Binds nickel. Probably functions as a nickel donor during metallocenter assembly. The chain is Urease accessory protein UreE from Pseudomonas putida (strain ATCC 700007 / DSM 6899 / JCM 31910 / BCRC 17059 / LMG 24140 / F1).